The sequence spans 557 residues: Dihydroxy-acid dehydratase (557 aa).

Position 49 (Cys49) interacts with [2Fe-2S] cluster. Asp81 is a binding site for Mg(2+). Cys122 is a binding site for [2Fe-2S] cluster. Mg(2+) contacts are provided by Asp123 and Lys124. Lys124 is subject to N6-carboxylysine. [2Fe-2S] cluster is bound at residue Cys194. Glu446 contributes to the Mg(2+) binding site. Ser472 functions as the Proton acceptor in the catalytic mechanism.

This sequence belongs to the IlvD/Edd family. As to quaternary structure, homodimer. The cofactor is [2Fe-2S] cluster. Requires Mg(2+) as cofactor.

The catalysed reaction is (2R)-2,3-dihydroxy-3-methylbutanoate = 3-methyl-2-oxobutanoate + H2O. It catalyses the reaction (2R,3R)-2,3-dihydroxy-3-methylpentanoate = (S)-3-methyl-2-oxopentanoate + H2O. The protein operates within amino-acid biosynthesis; L-isoleucine biosynthesis; L-isoleucine from 2-oxobutanoate: step 3/4. Its pathway is amino-acid biosynthesis; L-valine biosynthesis; L-valine from pyruvate: step 3/4. In terms of biological role, functions in the biosynthesis of branched-chain amino acids. Catalyzes the dehydration of (2R,3R)-2,3-dihydroxy-3-methylpentanoate (2,3-dihydroxy-3-methylvalerate) into 2-oxo-3-methylpentanoate (2-oxo-3-methylvalerate) and of (2R)-2,3-dihydroxy-3-methylbutanoate (2,3-dihydroxyisovalerate) into 2-oxo-3-methylbutanoate (2-oxoisovalerate), the penultimate precursor to L-isoleucine and L-valine, respectively. The sequence is that of Dihydroxy-acid dehydratase from Prochlorococcus marinus (strain AS9601).